We begin with the raw amino-acid sequence, 63 residues long: DNA-directed RNA polymerase 7 kDa subunit (63 aa).

The protein belongs to the poxviridae DNA-directed RNA polymerase 7 kDa subunit family. In terms of assembly, the DNA-dependent RNA polymerase used for intermediate and late genes expression consists of eight subunits 147 kDa, 133 kDa, 35 kDa, 30 kDa, 22 kDa, 19 kDa, 18 kDa and 7 kDa totalling more than 500 kDa in mass. The same holoenzyme, with the addition of the transcription-specificity factor RAP94, is used for early gene expression.

The protein resides in the virion. The catalysed reaction is RNA(n) + a ribonucleoside 5'-triphosphate = RNA(n+1) + diphosphate. Its function is as follows. Part of the DNA-dependent RNA polymerase which catalyzes the transcription of viral DNA into RNA using the four ribonucleoside triphosphates as substrates. Responsible for the transcription of early, intermediate and late genes. DNA-dependent RNA polymerase associates with the early transcription factor (ETF) thereby allowing the early genes transcription. Late transcription, and probably also intermediate transcription, require newly synthesized RNA polymerase. The polypeptide is DNA-directed RNA polymerase 7 kDa subunit (RPO7) (Fowlpox virus (strain NVSL) (FPV)).